The chain runs to 591 residues: NADH-quinone oxidoreductase subunit C/D (591 aa).

Residues 1 to 182 (MVTVVENTDP…TPYFLNTAKQ (182 aa)) form an NADH dehydrogenase I subunit C region. Residues 206-591 (DFMFLNIGPN…IDIVMADCDR (386 aa)) form an NADH dehydrogenase I subunit D region.

In the N-terminal section; belongs to the complex I 30 kDa subunit family. It in the C-terminal section; belongs to the complex I 49 kDa subunit family. In terms of assembly, NDH-1 is composed of 13 different subunits. Subunits NuoB, CD, E, F, and G constitute the peripheral sector of the complex.

The protein localises to the cell inner membrane. It carries out the reaction a quinone + NADH + 5 H(+)(in) = a quinol + NAD(+) + 4 H(+)(out). NDH-1 shuttles electrons from NADH, via FMN and iron-sulfur (Fe-S) centers, to quinones in the respiratory chain. The immediate electron acceptor for the enzyme in this species is believed to be ubiquinone. Couples the redox reaction to proton translocation (for every two electrons transferred, four hydrogen ions are translocated across the cytoplasmic membrane), and thus conserves the redox energy in a proton gradient. This is NADH-quinone oxidoreductase subunit C/D from Psychrobacter cryohalolentis (strain ATCC BAA-1226 / DSM 17306 / VKM B-2378 / K5).